The chain runs to 552 residues: Glutathione reductase, chloroplastic/mitochondrial (552 aa).

The N-terminal 60 residues, 1-60 (MNQAMATPLSLSCCSPTLTRSTLFFTKTFPFSRSFSTPLPLSTKTLISLSPPHRTFAVRA), are a transit peptide targeting the chloroplast and mitochondrion. FAD is bound by residues S83, G84, E103, T120, C121, and K129. S83 provides a ligand contact to glutathione. C121 and C126 are disulfide-bonded. Y178 contacts glutathione. An FAD-binding site is contributed by G194. Positions 254, 257, 260, 277, 283, and 341 each coordinate NADP(+). 2 residues coordinate FAD: D382 and T390. An NADP(+)-binding site is contributed by A420. H515 lines the FAD pocket. H515 functions as the Proton acceptor in the catalytic mechanism. Positions 527 to 552 (TPTRKVRKNQASQGKSDSKAKAVAGS) are disordered.

It belongs to the class-I pyridine nucleotide-disulfide oxidoreductase family. As to quaternary structure, homodimer. FAD serves as cofactor.

It localises to the plastid. The protein localises to the chloroplast. Its subcellular location is the mitochondrion. It catalyses the reaction 2 glutathione + NADP(+) = glutathione disulfide + NADPH + H(+). In terms of biological role, catalyzes the reduction of glutathione disulfide (GSSG) to reduced glutathione (GSH). Maintains high levels of GSH in the chloroplast. This chain is Glutathione reductase, chloroplastic/mitochondrial (GR), found in Pisum sativum (Garden pea).